The primary structure comprises 664 residues: MAAVGPPQQQVRMAHRQVWAALEVALRVPCLYIIDAIFNSYPDSSQSRFCIVLQIFLRLLGIFVSSIVLILSQRSLFKFYMYSSAFLLAATSVLVNYYASLHIDFYGAYNTSAFGIELLPRKGPSLWMALIVLQLTFGIGYVTLLQIHSIYSQLIILDLLVPVIGLITELPLHIRETLVFTSSLILTLNTVLVLAVKLKWFYYSTRYVYLLVRHMYRIYGLQLLMEDTWKRIRFPDILRVFWLTRVTAQATVLMYILRMANETDSFFISWDDFWDLICNLIISGCDSTLTVLGMSAVISSVAHYLGLGILAFIGSTEEDDRRLGFVAPVLFFILALQTGLSGLRPEERLIRLSRNMCLLLTAVLHFIHGMTDPVLMSLSASHVSSFRRHFPVLFVSACLFILPVLLSYVLWHHYALNTWLFAATAFCVELCLKVIVSLTVYTLFMIDGYYNVLWEKLDNYVYYVRSTGSIIVFIFGVVMFGNGAYTMMFESGSKIRAFMMCLHAYFNIYLQAKNGWKTFMNRRTAVKKINSLPEIKGSRLQEINDVCAICYHEFTTSARITPCNHYFHALCLRKWLYIQDTCPMCHQKVYIEDDIKDNSNVSNNNGFTPPNETPEEAVREAAAESDRELNEDDSTDCDDDVQRERNGVIQHTGAAAEEFNDDTD.

The residue at position 2 (alanine 2) is an N-acetylalanine. A run of 12 helical transmembrane segments spans residues 51–71 (IVLQIFLRLLGIFVSSIVLIL), 85–105 (AFLLAATSVLVNYYASLHIDF), 125–145 (SLWMALIVLQLTFGIGYVTLL), 154–174 (LIILDLLVPVIGLITELPLHI), 178–198 (LVFTSSLILTLNTVLVLAVKL), 293–313 (GMSAVISSVAHYLGLGILAFI), 323–343 (LGFVAPVLFFILALQTGLSGL), 356–376 (MCLLLTAVLHFIHGMTDPVLM), 390–410 (FPVLFVSACLFILPVLLSYVL), 420–440 (LFAATAFCVELCLKVIVSLTV), 469–489 (SIIVFIFGVVMFGNGAYTMMF), and 495–512 (IRAFMMCLHAYFNIYLQA). An RING-type; atypical zinc finger spans residues 547 to 586 (CAICYHEFTTSARITPCNHYFHALCLRKWLYIQDTCPMCH). Polar residues predominate over residues 599–610 (SNVSNNNGFTPP). The interval 599 to 664 (SNVSNNNGFT…AAEEFNDDTD (66 aa)) is disordered. Residues 616-628 (EAVREAAAESDRE) show a composition bias toward basic and acidic residues. Residues 629–639 (LNEDDSTDCDD) are compositionally biased toward acidic residues. Phosphoserine is present on serine 634. 2 positions are modified to phosphothreonine: threonine 635 and threonine 663.

In terms of assembly, interacts with VHL. Interacts with MHC class I and HM13. Component of SCAP-SREBP complex composed of SREBF2, SCAP and RNF139; the complex hampers the interaction between SCAP and SEC24B, thereby reducing SREBF2 proteolytic processing. Interacts with SREBF2 (via C-terminal domain). Interacts with SCAP; the interaction inhibits the interaction of SCAP with SEC24B and hampering the ER to Golgi transport of the SCAP-SREBP complex. Interacts with SEC24B. Interacts with INSIG1 and INSIG2. Interacts with EIF3F and EIF3H; the interaction leads to protein translation inhibitions in a ubiquitination-dependent manner. Interacts with XBP1; the interaction induces ubiquitination and degradation of XBP1. Interacts with AUP1, AMFR and UBE2G2; interaction with AUP1 facilitates interaction of RNF139 with ubiquitin-conjugating enzyme UBE2G2 and ubiquitin ligase AMFR/gp78, leading to sterol-induced ubiquitination of HMGCR and its subsequent proteasomal degradation. Post-translationally, autoubiquitinated. Ubiquitination is induced by sterol and leads to ist degradation via the ubiquitin-proteasome pathway.

It localises to the endoplasmic reticulum membrane. It carries out the reaction S-ubiquitinyl-[E2 ubiquitin-conjugating enzyme]-L-cysteine + [acceptor protein]-L-lysine = [E2 ubiquitin-conjugating enzyme]-L-cysteine + N(6)-ubiquitinyl-[acceptor protein]-L-lysine.. Its pathway is protein modification; protein ubiquitination. In terms of biological role, E3-ubiquitin ligase; acts as a negative regulator of cell proliferation through mechanisms involving G2/M arrest and cell death. Required for MHC class I ubiquitination in cells expressing the cytomegalovirus protein US2 before dislocation from the endoplasmic reticulum (ER). Affects SREBP processing by hindering the SREBP-SCAP complex translocation from the ER to the Golgi, thereby reducing SREBF2 target gene expression. Involved in the sterol-accelerated degradation of HMGCR. This is achieved through binding to INSIG1 and/or INSIG2 at the ER membrane. In addition, interaction of RNF139 with AUP1 facilitates interaction of RNF139 with ubiquitin-conjugating enzyme UBE2G2 and ubiquitin ligase AMFR, leading to ubiquitination of HMGCR. The ubiquitinated HMGCR is then released from the ER by the complex into the cytosol for subsequent destruction. Required for INSIG1 ubiquitination. May be required for EIF3 complex ubiquitination. This is E3 ubiquitin-protein ligase RNF139 (RNF139) from Pongo abelii (Sumatran orangutan).